The following is a 186-amino-acid chain: UPF0397 protein LBUL_1584 (186 aa).

The next 5 helical transmembrane spans lie at Ile13–Pro33, Ala46–Ile66, Thr79–Leu99, Val114–Val134, and Gln150–Leu170.

The protein belongs to the UPF0397 family.

The protein localises to the cell membrane. The sequence is that of UPF0397 protein LBUL_1584 from Lactobacillus delbrueckii subsp. bulgaricus (strain ATCC BAA-365 / Lb-18).